Reading from the N-terminus, the 366-residue chain is Alanine racemase (366 aa).

Lysine 40 functions as the Proton acceptor; specific for D-alanine in the catalytic mechanism. N6-(pyridoxal phosphate)lysine is present on lysine 40. Residue arginine 136 participates in substrate binding. Catalysis depends on tyrosine 263, which acts as the Proton acceptor; specific for L-alanine. Methionine 310 serves as a coordination point for substrate.

The protein belongs to the alanine racemase family. Pyridoxal 5'-phosphate is required as a cofactor.

The enzyme catalyses L-alanine = D-alanine. The protein operates within amino-acid biosynthesis; D-alanine biosynthesis; D-alanine from L-alanine: step 1/1. In terms of biological role, catalyzes the interconversion of L-alanine and D-alanine. May also act on other amino acids. This is Alanine racemase (alr) from Streptococcus pyogenes serotype M5 (strain Manfredo).